Reading from the N-terminus, the 636-residue chain is MPRETSLVTIIGEDSYKKLRSSRCLLVGAGGIGSELLKDIILMEFGEIHIVDLDTIDLSNLNRQFLFRQKDIKQPKSTTAVKAVQHFNNSKLVPYQGNVMDISTFPLHWFEQFDIIFNALDNLAARRYVNKISQFLSLPLIESGTAGFDGYMQPIIPGKTECFECTKKETPKTFPVCTIRSTPSQPIHCIVWAKNFLFNQLFASETSGNEDDNNQDWGTDDAEEIKRIKQETNELYELQKIIISRDASRIPEILNKLFIQDINKLLAIENLWKTRTKPVPLSDSQINTPTKTAQSASNSVGTIQEQISNFINITQKLMDRYPKEQNHIEFDKDDADTLEFVATAANIRSHIFNIPMKSVFDIKQIAGNIIPAIATTNAIVAGASSLISLRVLNLLKYAPTTKYTDLNMAFTAKASNLSQNRYLSNPKLAPPNKNCPVCSKVCRGVIKLSSDCLNKMKLSDFVVLIREKYSYPQDISLLDASNQRLLFDYDFEDLNDRTLSEINLGNGSIILFSDEEGDTMIRKAIELFLDVDDELPCNTCSLPDVEVPLIKANNSPSKNEEEEKNEKGADVVATTNSHGKDGIVILDDDEGEITIDAEPINGSKKRPVDTEISEAPSNKRTKLVNEPTNSDIVELD.

Residues 28 to 33 (GAGGIG), D52, 60 to 63 (NLNR), K76, and 121 to 126 (DNLAAR) contribute to the ATP site. Residues C162 and C165 each coordinate Zn(2+). C177 serves as the catalytic Glycyl thioester intermediate. 2 residues coordinate Zn(2+): C435 and C438. Residues 581–636 (DGIVILDDDEGEITIDAEPINGSKKRPVDTEISEAPSNKRTKLVNEPTNSDIVELD) form a disordered region. Residues 586–595 (LDDDEGEITI) show a composition bias toward acidic residues. The Nuclear localization signal signature appears at 619–622 (KRTK). Over residues 626 to 636 (EPTNSDIVELD) the composition is skewed to polar residues.

Belongs to the ubiquitin-activating E1 family. As to quaternary structure, heterodimer of UBA2 and AOS1. The complex binds SMT3. Multiubiquitinated in vivo.

Its subcellular location is the nucleus. Its pathway is protein modification; protein sumoylation. In terms of biological role, the dimeric enzyme acts as a SMT3 E1 ligase. It mediates ATP-dependent activation of SMT3 and formation of a thioester with a conserved cysteine residue on AOS1. The chain is Ubiquitin-activating enzyme E1-like (UBA2) from Saccharomyces cerevisiae (strain ATCC 204508 / S288c) (Baker's yeast).